An 874-amino-acid chain; its full sequence is Alanine--tRNA ligase (874 aa).

Zn(2+)-binding residues include His562, His566, Cys665, and His669.

This sequence belongs to the class-II aminoacyl-tRNA synthetase family. The cofactor is Zn(2+).

The protein localises to the cytoplasm. It catalyses the reaction tRNA(Ala) + L-alanine + ATP = L-alanyl-tRNA(Ala) + AMP + diphosphate. In terms of biological role, catalyzes the attachment of alanine to tRNA(Ala) in a two-step reaction: alanine is first activated by ATP to form Ala-AMP and then transferred to the acceptor end of tRNA(Ala). Also edits incorrectly charged Ser-tRNA(Ala) and Gly-tRNA(Ala) via its editing domain. This chain is Alanine--tRNA ligase, found in Stutzerimonas stutzeri (strain A1501) (Pseudomonas stutzeri).